We begin with the raw amino-acid sequence, 229 residues long: Aldehyde oxidoreductase iron-sulfur-binding subunit PaoA (229 aa).

The tract at residues 1–21 (MSNQGEYPEDNRVGKHEPHDL) is disordered. Residues 1 to 53 (MSNQGEYPEDNRVGKHEPHDLSLTRRDLIKVSAATAAAAVVYPHSTLAASVPA) constitute a signal peptide (tat-type signal). Residues 9-21 (EDNRVGKHEPHDL) are compositionally biased toward basic and acidic residues. The 77-residue stretch at 61–137 (MPLTLKVNGK…GAEITTIEGL (77 aa)) folds into the 2Fe-2S ferredoxin-type domain. [2Fe-2S] cluster-binding residues include C99, C104, G105, C107, C119, C158, C161, C208, and C210.

As to quaternary structure, heterotrimer composed of PaoA, PaoB and PaoC. It depends on [2Fe-2S] cluster as a cofactor. Exported by the Tat system. The position of the signal peptide cleavage has not been experimentally proven.

The protein localises to the periplasm. The enzyme catalyses an aldehyde + A + H2O = a carboxylate + AH2 + H(+). Functionally, oxidizes aldehydes to the corresponding carboxylic acids with a preference for aromatic aldehydes. It might play a role in the detoxification of aldehydes to avoid cell damage. The polypeptide is Aldehyde oxidoreductase iron-sulfur-binding subunit PaoA (Escherichia coli O157:H7).